The primary structure comprises 1039 residues: Potassium-transporting ATPase alpha chain 2 (1039 aa).

The Cytoplasmic portion of the chain corresponds to 1–102; that stretch reads MHQKTPEIYS…NSLTPPKQTP (102 aa). A helical membrane pass occupies residues 103 to 123; it reads EIVKFLKQMVGGFSILLWVGA. Topologically, residues 124 to 146 are lumenal; the sequence is FLCWIAYGIQYSSDKSASLNNVY. A helical transmembrane segment spans residues 147–167; that stretch reads LGCVLGLVVILTGIFAYYQEA. At 168–303 the chain is on the cytoplasmic side; that stretch reads KSTNIMSSFN…NEKTPIAIEI (136 aa). The chain crosses the membrane as a helical span at residues 304–323; sequence EHFVHIVAGVAVSIGILFFI. Residues 324 to 335 are Lumenal-facing; that stretch reads IAVSLKYQVLDS. Residues 336–353 traverse the membrane as a helical segment; the sequence is IIFLIGIIVANVPEGLLA. The Cytoplasmic portion of the chain corresponds to 354–787; the sequence is TVTVTLSLTA…EEGRLIFDNL (434 aa). Asp391 functions as the 4-aspartylphosphate intermediate in the catalytic mechanism. The Mg(2+) site is built by Asp732 and Asp736. Residues 788 to 807 form a helical membrane-spanning segment; sequence KKTIAYSLTKNIAELCPFLI. At 808–817 the chain is on the lumenal side; the sequence is YIIVGLPLPI. A helical membrane pass occupies residues 818–838; the sequence is GTITILFIDLGTDIIPSIALA. Over 839-858 the chain is Cytoplasmic; that stretch reads YEKAESDIMNRKPRHKNKDR. A helical membrane pass occupies residues 859–881; that stretch reads LVNQPLAVYSYLHIGLMQALGAF. The Lumenal segment spans residues 882-933; the sequence is LVYFTVYAQEGFLPRTLINLRVEWEKDYVNDLKDSYGQEWTRYQREYLEWTG. A helical transmembrane segment spans residues 934–953; that stretch reads YTAFFVGILVQQIADLIIRK. Topologically, residues 954-967 are cytoplasmic; sequence TRRNSIFQQGLFRN. Ser958 is subject to Phosphoserine; by PKA. The helical transmembrane segment at 968 to 986 threads the bilayer; that stretch reads KVIWVGITSQIIIGLILSY. The Lumenal segment spans residues 987–1001; that stretch reads GLGSVTALSFTMLRA. Residues 1002-1022 form a helical membrane-spanning segment; sequence QYWFVAVPHAILIWVYDEVRK. The Cytoplasmic portion of the chain corresponds to 1023–1039; the sequence is LFIRLYPGSWWDKNMYY.

This sequence belongs to the cation transport ATPase (P-type) (TC 3.A.3) family. Type IIC subfamily. In terms of assembly, the ATPase pump is composed of a catalytic alpha subunit and an auxiliary non-catalytic beta subunit. The alpha subunit pairs with the beta subunit of gastric H(+)/K(+) ATPase ATP4B or the beta subunit of Na(+)/K(+) ATPases ATP1B1 and ATP1B3; this interaction is required for the formation of a functionally active pump and its targeting at the plasma membrane. As to expression, expressed in airway epithelial cells (at protein level). Found in skin and kidney. Detected in prostate basal cells (at protein level). Expression is increased in benign prostate hyperplasia and tumor tissues (at protein level).

The protein resides in the apical cell membrane. The enzyme catalyses K(+)(out) + ATP + H2O + H(+)(in) = K(+)(in) + ADP + phosphate + 2 H(+)(out). The catalysed reaction is K(+)(out) + Na(+)(in) + ATP + H2O = K(+)(in) + Na(+)(out) + ADP + phosphate + H(+). The ATPase activity is regulated by monovalent cations and pH. Up-regulated by K(+) ions in a dose-dependent way. Down-regulated by Na(+) ions. Inhibited by Na(+)/K(+)-ATPase inhibitor ouabain and H(+)/K(+)-ATPase inhibitor SCH-28080 with an intermediate sensitivity to completely resistant Na(+)/K(+)-ATPases and highly sensitive H(+)/K(+)-ATPases. Its function is as follows. The catalytic subunit of a H(+)/K(+) ATPase and/or Na(+)/K(+) ATPase pump which transports K(+) ions in exchange for Na(+) and/or H(+) ions across the apical membrane of epithelial cells. Uses ATP as an energy source to pump K(+) ions into the cell while transporting Na(+) and/or H(+) ions to the extracellular compartment. Involved in the maintenance of electrolyte homeostasis through K(+) ion absorption in kidney and colon. In the airway epithelium, may play a primary role in mucus acidification regulating its viscosity and clearance. This Homo sapiens (Human) protein is Potassium-transporting ATPase alpha chain 2.